A 124-amino-acid chain; its full sequence is Alpha-amylase inhibitor 0.53 (124 aa).

4 cysteine pairs are disulfide-bonded: Cys-20–Cys-41, Cys-28–Cys-83, Cys-42–Cys-99, and Cys-54–Cys-115.

The protein belongs to the protease inhibitor I6 (cereal trypsin/alpha-amylase inhibitor) family. In terms of assembly, homodimer. The disulfide bonds are essential for the inhibitor activity. As to expression, endosperm.

It is found in the secreted. Functionally, alpha-amylase inhibitor. The polypeptide is Alpha-amylase inhibitor 0.53 (Triticum aestivum (Wheat)).